Consider the following 586-residue polypeptide: Arginine--tRNA ligase (586 aa).

Positions alanine 128 to histidine 138 match the 'HIGH' region motif.

Belongs to the class-I aminoacyl-tRNA synthetase family. As to quaternary structure, monomer.

The protein resides in the cytoplasm. It catalyses the reaction tRNA(Arg) + L-arginine + ATP = L-arginyl-tRNA(Arg) + AMP + diphosphate. This Legionella pneumophila (strain Corby) protein is Arginine--tRNA ligase.